The sequence spans 314 residues: Methylglutaconyl-CoA hydratase, mitochondrial (314 aa).

A mitochondrion-targeting transit peptide spans 1–42 (MAAAAPGALGALRTGRVRLVAACCARLGPAAWARGTAPRRGY). At lysine 75 the chain carries N6-acetyllysine; alternate. At lysine 75 the chain carries N6-succinyllysine; alternate. Residues 80–94 (KNLLKMLSKAVDALK) form an RNA-binding region. Lysine 84 carries the N6-succinyllysine modification. N6-acetyllysine; alternate occurs at positions 88 and 119. 2 positions are modified to N6-succinyllysine; alternate: lysine 88 and lysine 119. N6-succinyllysine is present on residues lysine 123 and lysine 135. 2 positions are modified to N6-acetyllysine; alternate: lysine 179 and lysine 186. 2 positions are modified to N6-succinyllysine; alternate: lysine 179 and lysine 186. An N6-succinyllysine modification is found at lysine 304.

The protein belongs to the enoyl-CoA hydratase/isomerase family. As to quaternary structure, homohexamer. Detected in heart, brain, liver, spleen, skeletal muscle and kidney. Expressed in brain, kidney, liver and spleen tissue (at protein level).

It is found in the mitochondrion. It carries out the reaction (3S)-3-hydroxy-3-methylglutaryl-CoA = 3-methyl-(2E)-glutaconyl-CoA + H2O. The catalysed reaction is (3S)-citramalyl-CoA = itaconyl-CoA + H2O. The enzyme catalyses 3-hydroxyisovaleryl-CoA = 3-methylbut-2-enoyl-CoA + H2O. It catalyses the reaction (S)-3-hydroxyglutaryl-CoA = (2E)-glutaconyl-CoA + H2O. It participates in amino-acid degradation; L-leucine degradation; (S)-3-hydroxy-3-methylglutaryl-CoA from 3-isovaleryl-CoA: step 3/3. In terms of biological role, catalyzes the fifth step in the leucine degradation pathway, the reversible hydration of 3-methylglutaconyl-CoA (3-MG-CoA) to 3-hydroxy-3-methylglutaryl-CoA (HMG-CoA). Can catalyze the reverse reaction but at a much lower rate in vitro. HMG-CoA is then quickly degraded by another enzyme (such as HMG-CoA lyase) to give acetyl-CoA and acetoacetate. Uses other substrates such as (2E)-glutaconyl-CoA efficiently in vitro, and to a lesser extent 3-methylcrotonyl-CoA (3-methyl-(2E)-butenoyl-CoA), crotonyl-CoA ((2E)-butenoyl-CoA) and 3-hydroxybutanoyl-CoA (the missing carboxylate reduces affinity to the active site). Originally it was identified as an RNA-binding protein as it binds to AU-rich elements (AREs) in vitro. AREs direct rapid RNA degradation and mRNA deadenylation. Might have itaconyl-CoA hydratase activity, converting itaconyl-CoA into citramalyl-CoA in the C5-dicarboxylate catabolism pathway. The C5-dicarboxylate catabolism pathway is required to detoxify itaconate, an antimicrobial metabolite and immunomodulator produced by macrophages during certain infections, that can act as a vitamin B12-poisoning metabolite. This Mus musculus (Mouse) protein is Methylglutaconyl-CoA hydratase, mitochondrial (Auh).